The primary structure comprises 256 residues: Imidazole glycerol phosphate synthase subunit HisF (256 aa).

Active-site residues include Asp12 and Asp131.

Belongs to the HisA/HisF family. As to quaternary structure, heterodimer of HisH and HisF.

It is found in the cytoplasm. The catalysed reaction is 5-[(5-phospho-1-deoxy-D-ribulos-1-ylimino)methylamino]-1-(5-phospho-beta-D-ribosyl)imidazole-4-carboxamide + L-glutamine = D-erythro-1-(imidazol-4-yl)glycerol 3-phosphate + 5-amino-1-(5-phospho-beta-D-ribosyl)imidazole-4-carboxamide + L-glutamate + H(+). It functions in the pathway amino-acid biosynthesis; L-histidine biosynthesis; L-histidine from 5-phospho-alpha-D-ribose 1-diphosphate: step 5/9. In terms of biological role, IGPS catalyzes the conversion of PRFAR and glutamine to IGP, AICAR and glutamate. The HisF subunit catalyzes the cyclization activity that produces IGP and AICAR from PRFAR using the ammonia provided by the HisH subunit. The protein is Imidazole glycerol phosphate synthase subunit HisF of Bifidobacterium longum (strain DJO10A).